Here is a 210-residue protein sequence, read N- to C-terminus: Large ribosomal subunit protein uL3 (210 aa).

Belongs to the universal ribosomal protein uL3 family. In terms of assembly, part of the 50S ribosomal subunit. Forms a cluster with proteins L14 and L19.

Functionally, one of the primary rRNA binding proteins, it binds directly near the 3'-end of the 23S rRNA, where it nucleates assembly of the 50S subunit. The sequence is that of Large ribosomal subunit protein uL3 from Syntrophotalea carbinolica (strain DSM 2380 / NBRC 103641 / GraBd1) (Pelobacter carbinolicus).